A 965-amino-acid polypeptide reads, in one-letter code: Fibronectin-binding protein A (965 aa).

The N-terminal stretch at 1-36 (MKNNLRYGIRKHKLGAASVFLGTMIVIGMGQDKEAA) is a signal peptide. The YSIRK-G/S signaling motif signature appears at 7-18 (YGIRKHKLGAAS). The tract at residues 37-206 (ASEQKTTTVE…VTSKVTVEDE (170 aa)) is disordered. The tract at residues 37-514 (ASEQKTTTVE…SNKANGDGKY (478 aa)) is ligand-binding A region. Over residues 39-55 (EQKTTTVEENGNSATDN) the composition is skewed to polar residues. Residues 59-74 (ETQTTTTNVNTIDETQ) show a composition bias toward low complexity. Residues 75-92 (SYSATATEQPSNATQVTT) show a composition bias toward polar residues. Over residues 112-122 (TVKEEVVKEEA) the composition is skewed to basic and acidic residues. Residues 126 to 139 (VKETTQSQDNSGDQ) are compositionally biased toward polar residues. A compositionally biased stretch (basic and acidic residues) spans 179 to 193 (DVAEAKEASDAKVET). The interval 194 to 514 (GTDVTSKVTV…SNKANGDGKY (321 aa)) is fibrinogen/elastin/tropoelastin-binding. The segment at 515-837 (GPIVDSNNFE…EGQQTIEEDT (323 aa)) is fibronectin-binding. One copy of the B-1 repeat lies at 548–577 (ENQDNTPLDIDYHTAIDGEGGYVDGYIETI). A 2 X approximate tandem repeats region spans residues 548–607 (ENQDNTPLDIDYHTAIDGEGGYVDGYIETIEETDSSAIDIDYHTAVDSEAGHVGGYTESS). Residues 578–607 (EETDSSAIDIDYHTAVDSEAGHVGGYTESS) form a B-2 repeat. Disordered stretches follow at residues 598-625 (GHVGGYTESSEESNPIDFEESTHENSKH), 743-774 (LGYEGGQNSGNQSFEEDTEEDKPKYEQGGNII), 794-903 (IEED…GKVV), and 916-942 (VAPTKQKQAKKSELPETGGEESTNKGM). One copy of the D-1; truncated repeat lies at 748–770 (GQNSGNQSFEEDTEEDKPKYEQG). A 4 X approximate tandem repeats region spans residues 748–839 (GQNSGNQSFE…QQTIEEDTTP (92 aa)). The D-2; truncated repeat unit spans residues 771 to 785 (GNIIDIDFDSVPQIH). A D-3 repeat occupies 786 to 824 (GFNKHNEIIEEDTNKDKPNYQFGGHNSVDFEEDTLPKVS). Positions 794–803 (IEEDTNKDKP) are enriched in basic and acidic residues. The stretch at 825–839 (GQNEGQQTIEEDTTP) is one D-4; truncated repeat. The span at 839-885 (PPTPPTPEVPSEPGTPTPPTPEVPSEPGKPTPPTPEVPAEPGKPVPP) shows a compositional bias: pro residues. WR repeat units follow at residues 840-853 (PTPPTPEVPSEPGT), 854-867 (PTPPTPEVPSEPGK), 868-881 (PTPPTPEVPAEPGK), and 882-895 (PVPPAKEEPKKPSK). Residues 840 to 895 (PTPPTPEVPSEPGTPTPPTPEVPSEPGKPTPPTPEVPAEPGKPVPPAKEEPKKPSK) form a 4 X tandem repeats, Pro-rich (WR) region. The LPXTG sorting signal motif lies at 929–933 (LPETG). A Pentaglycyl murein peptidoglycan amidated threonine modification is found at Thr-932. Positions 933-965 (GGEESTNKGMLFGGLFSILGLALLRRNKKNHKA) are cleaved as a propeptide — removed by sortase.

It localises to the secreted. It is found in the cell wall. In terms of biological role, promotes bacterial attachment to multiple substrates, such as fibronectin (Fn), fibrinogen (Fg), elastin peptides and tropoelastin. This confers to S.aureus the ability to invade endothelial cells. Promotes adherence to and aggregation of activated platelets. This chain is Fibronectin-binding protein A (fnbA), found in Staphylococcus aureus (strain MRSA252).